Here is a 581-residue protein sequence, read N- to C-terminus: Major facilitator superfamily multidrug transporter NAG4 (581 aa).

The span at 1-14 (MSHATDSTLDNASV) shows a compositional bias: polar residues. Residues 1–43 (MSHATDSTLDNASVDSEKVRDFGDDLQNHPVQPTRSILSKIRS) form a disordered region. N-linked (GlcNAc...) asparagine glycosylation occurs at asparagine 11. A compositionally biased stretch (basic and acidic residues) spans 15–27 (DSEKVRDFGDDLQ). Asparagine 125 carries N-linked (GlcNAc...) asparagine glycosylation. 12 consecutive transmembrane segments (helical) span residues 132–152 (WLYTLVLGAVCFVVALGSAIV), 169–189 (VIILASVTVFVIGFGVGPLVF), 199–219 (KPIYVVTLFIAVVFIVPCGAA), 230–250 (LIDGIAFSAPMTLIGGSLADI), 261–281 (AIFSAAPFLGPVCGPIFGGLL), 290–310 (WIYWTFLIVAGVFYAIFIAIV), 365–385 (IVFLMTIYMAICYGLLYMFFF), 403–423 (GVMFIPIGVGVIIATIAAPFF), 447–467 (LIPMMIACWFVPVGLFAFAWS), 471–491 (WVSWAGPCFSGLAAGFGFCCL), 510–530 (ALAAKTFVRSIWGACVPLFTI), and 544–564 (LMAFISLACCAIPYLFFFFGA).

The protein belongs to the major facilitator superfamily. DHA1 family. Polyamines/proton antiporter (TC 2.A.1.2.16) subfamily.

The protein resides in the cell membrane. Its function is as follows. MFS transporter involved in N-acetylglucosamine (GlcNAc) uptake. Confers resistance to cycloheximide, 4-nitroquinoline-N-oxide, and 1,10-phenanthroline, and contributes to virulence. In Candida albicans (strain SC5314 / ATCC MYA-2876) (Yeast), this protein is Major facilitator superfamily multidrug transporter NAG4.